We begin with the raw amino-acid sequence, 85 residues long: MKTIFTVGAVVLATCLLSGCVNEQKVNQLASNVQTLNAKIARLEQDMKALRPQIYAAKSEANRANTRLDAQDYFDCLRCLRMYAE.

The first 19 residues, 1–19, serve as a signal peptide directing secretion; that stretch reads MKTIFTVGAVVLATCLLSG. The N-palmitoyl cysteine moiety is linked to residue Cys-20. Cys-20 carries the S-diacylglycerol cysteine lipid modification.

The protein localises to the cell outer membrane. This is an uncharacterized protein from Escherichia coli (strain K12).